A 213-amino-acid chain; its full sequence is Ribonuclease T (213 aa).

The region spanning 28–202 (VVVDVETGGF…YDTEQTARLF (175 aa)) is the Exonuclease domain. Residues aspartate 31, glutamate 33, histidine 189, and aspartate 194 each contribute to the Mg(2+) site. Histidine 189 serves as the catalytic Proton donor/acceptor.

The protein belongs to the RNase T family. Homodimer. It depends on Mg(2+) as a cofactor.

In terms of biological role, trims short 3' overhangs of a variety of RNA species, leaving a one or two nucleotide 3' overhang. Responsible for the end-turnover of tRNA: specifically removes the terminal AMP residue from uncharged tRNA (tRNA-C-C-A). Also appears to be involved in tRNA biosynthesis. The polypeptide is Ribonuclease T (Xanthomonas axonopodis pv. citri (strain 306)).